The primary structure comprises 221 residues: MKTCHSHDELIHIYLDGDATKEQKEELYAHLQSCPSCREHLQELKKSIAFIQSSSHIEAPEGFTAGVMAKLPKTKKTAKWKLKAKRHPILVAAAIFLIMMSAAFFSAWSHTTDGIAVSGNGPFVIDKEAGVVVVPEGEVIDGDLVVRNGTLVLEGEVRGNVLLINSRFNKDTLYASPNQVTGEIEEVDKALSWAWYNMKEFFNEVVAVFDAGEDDPHSTDN.

The Cytoplasmic segment spans residues 1-87; sequence MKTCHSHDEL…AKWKLKAKRH (87 aa). Positions 30, 34, and 37 each coordinate Zn(2+). Residues 88–108 form a helical membrane-spanning segment; that stretch reads PILVAAAIFLIMMSAAFFSAW. Residues 109 to 221 lie on the Extracellular side of the membrane; it reads SHTTDGIAVS…GEDDPHSTDN (113 aa).

The protein belongs to the zinc-associated anti-sigma factor (ZAS) superfamily. Anti-sigma-W factor family. The cofactor is Zn(2+). Is processed by three successive proteolytic events. First, the extracellular region of RsiW is cleaved by PrsW (Site-1 cleavage) in response to cell envelope stresses. Next, it undergoes cleavage at an intramembrane site (Site-2 cleavage) mediated by RasP. This cleavage uncovers a cryptic proteolytic tag with conserved alanine residues in the transmembrane segment, that is recognized mainly by the ClpXP protease, which completely degrades the protein in the cytoplasm and leads to the induction of the sigma-W-controlled genes.

Its subcellular location is the membrane. Its function is as follows. Is the anti-sigma factor for SigW. The presence of RsiW leads to the inactivation of SigW, and its proteolytic destruction to sigma-W activation. In Shouchella clausii (strain KSM-K16) (Alkalihalobacillus clausii), this protein is Anti-sigma-W factor RsiW (rsiW).